We begin with the raw amino-acid sequence, 396 residues long: MMFRTLDDANVQSKRVLVRVDLNVPMANGEVTDLTRIERIVPTIAELSRKGAKVILLAHFGRPKGVASDENSLKHVVKPLSKVLDHSVHFAEDCIGDKAKAAVDALKDGDVLLLENTRFHKGEEKNDPEFVQALAANGDLYVNDAFSAAHRAHASTEGLAHVLPAFAGRAMQAELEALEKGLGNPARPVVAIVGGAKVSTKLDLLSNLIEKVDALVIGGGMANTFLAAKGLDVGKSLCEHELASTAREIMAKAETTKCAIILPVDAVVGWHFAADTPHQTYGVDSVPGDAMILDAGELSTDLIASAIDDAATLVWNGPLGAFELRPFDTATVKVARHVAKRTKEGKLVSVGGGGDTVAALNHAGVADDFTYISTAGGAFLEWMEGKPLPGVDVLKK.

Substrate contacts are provided by residues 21–23 (DLN), Arg-36, 59–62 (HFGR), Arg-118, and Arg-151. ATP is bound by residues Lys-201, Glu-323, and 353–356 (GGDT).

This sequence belongs to the phosphoglycerate kinase family. In terms of assembly, monomer.

It is found in the cytoplasm. It carries out the reaction (2R)-3-phosphoglycerate + ATP = (2R)-3-phospho-glyceroyl phosphate + ADP. The protein operates within carbohydrate degradation; glycolysis; pyruvate from D-glyceraldehyde 3-phosphate: step 2/5. The chain is Phosphoglycerate kinase from Brucella abortus biovar 1 (strain 9-941).